Here is an 888-residue protein sequence, read N- to C-terminus: Extra-large guanine nucleotide-binding protein 1 (888 aa).

The tract at residues 98–119 (SVIEHTEEEEEEEGGDGEDCEL) is disordered. Residues 103-118 (TEEEEEEEGGDGEDCE) are compositionally biased toward acidic residues. Positions 205–222 (RRVRVVPVKKQPQTKGKK) match the Nuclear localization signal motif. The segment at 225–268 (CYRCFKGSRFTEKEVCLVCDAKYCNSCVLRAMGSMPEGRKCVTC) adopts an RING-type; degenerate zinc-finger fold. One can recognise a G-alpha domain in the interval 482–879 (TLQKILLVGN…NICMSEYSMY (398 aa)). The interval 485–498 (KILLVGNSGSGTST) is G1 motif. Residues 490-498 (GNSGSGTST) and 661-669 (DILYAEGVT) contribute to the GTP site. Ca(2+) contacts are provided by S497 and T669. The tract at residues 661 to 669 (DILYAEGVT) is G2 motif. The tract at residues 702 to 711 (YQLIRVPSRG) is G3 motif. A G4 motif region spans residues 770-777 (LLILNKYD). 774-777 (NKYD) is a GTP binding site. The interval 843 to 848 (SKSLDP) is G5 motif.

Belongs to the G-alpha family. XLG subfamily. Requires Ca(2+) as cofactor. Ubiquitous. Strongly expressed in vascular tissues, root and shoot meristems and lateral root primordia.

It is found in the nucleus. Its function is as follows. Guanine nucleotide-binding proteins (G proteins) are involved as modulators or transducers in various transmembrane signaling systems. Binds GTP with specificity. Plays a role in the root morphogenesis by regulation of the cell proliferation. This Arabidopsis thaliana (Mouse-ear cress) protein is Extra-large guanine nucleotide-binding protein 1 (XLG1).